A 100-amino-acid chain; its full sequence is NADH-quinone oxidoreductase subunit K (100 aa).

Helical transmembrane passes span 4–24 (LQHG…GLII), 28–48 (LLFM…AFVV), and 60–80 (VMYI…LALL).

This sequence belongs to the complex I subunit 4L family. In terms of assembly, NDH-1 is composed of 13 different subunits. Subunits NuoA, H, J, K, L, M, N constitute the membrane sector of the complex.

It is found in the cell inner membrane. It catalyses the reaction a quinone + NADH + 5 H(+)(in) = a quinol + NAD(+) + 4 H(+)(out). Functionally, NDH-1 shuttles electrons from NADH, via FMN and iron-sulfur (Fe-S) centers, to quinones in the respiratory chain. The immediate electron acceptor for the enzyme in this species is believed to be ubiquinone. Couples the redox reaction to proton translocation (for every two electrons transferred, four hydrogen ions are translocated across the cytoplasmic membrane), and thus conserves the redox energy in a proton gradient. This chain is NADH-quinone oxidoreductase subunit K, found in Yersinia enterocolitica serotype O:8 / biotype 1B (strain NCTC 13174 / 8081).